A 705-amino-acid polypeptide reads, in one-letter code: MARITPIAYYRNIGISAHIDAGKTTTTERILFYTGVNHKIGEVHHGAATMDWMAQEQERGITITSAATTCFWSGMAKQFNAHRINIIDTPGHVDFTIEVERSMRILDGVVMIYCAVGGVQPQSETVWRQANKYKVPRIAFVNKMDRMGANYLRVVEQIRTRLSAKPVPIQLAIGAEENFTGVIDLVKMKAIHWNEADQGISFTYGNIPTEMLDLAEKWHQNLVEIAVEASTELMEKYLNSEIISEEEIKASLRQLVLNNDIILVTCGSAFKNKGVQALLDAVIEYLPAPTDVSIVNRMLTVENKQTKIYDNSLSSDKAPFSALAFKIATDPFVGNLTFFRVYSGMVSSGDMVFNSVKEKRERFGRIVQMHANKREEIKEVHAGDIAAAIGLKDVTTGDTLCDPEAPIILEKMDFPEPVISVAVEPKTKADQEKMGFALNRLAQEDPSFHVWIDEESGETIIAGMGELHLEILIDRMRREFNVLANVGKPQVAYRETIRVTVEQEGKFIRQSGGRGQFGHVWLRIEPMEPGGKTYEFLNEIVGGVIPKEYLPAVDKGIQEQLKSGILAGYPIVDVRVAVFDGSYHEVDSSEMAFKLAASIAFKEGFMKAKPILLEPIMQVEVETPEDYMGDVIGDLNRRRGIINGMIDNTTGKTIRVQVPLSEMFGYATDLRSQTQGRASYTMEFLKYHEVPSHVVQTIIEAHQTK.

The tr-type G domain maps to 8–290; sequence AYYRNIGISA…AVIEYLPAPT (283 aa). GTP-binding positions include 17–24, 88–92, and 142–145; these read AHIDAGKT, DTPGH, and NKMD.

This sequence belongs to the TRAFAC class translation factor GTPase superfamily. Classic translation factor GTPase family. EF-G/EF-2 subfamily.

It localises to the cytoplasm. Functionally, catalyzes the GTP-dependent ribosomal translocation step during translation elongation. During this step, the ribosome changes from the pre-translocational (PRE) to the post-translocational (POST) state as the newly formed A-site-bound peptidyl-tRNA and P-site-bound deacylated tRNA move to the P and E sites, respectively. Catalyzes the coordinated movement of the two tRNA molecules, the mRNA and conformational changes in the ribosome. The polypeptide is Elongation factor G (Baumannia cicadellinicola subsp. Homalodisca coagulata).